Consider the following 939-residue polypeptide: AP-2 complex subunit alpha (939 aa).

A compositionally biased stretch (basic and acidic residues) spans Arg623–Lys633. The segment at Arg623–Asn660 is disordered. Over residues Pro635 to Asn660 the composition is skewed to polar residues.

The protein belongs to the adapter complexes large subunit family. Adaptor protein complex 2 (AP-2) is a heterotetramer composed of two large adaptins (alpha-type and beta-type subunits), a medium adaptin (mu-type subunit AP50) and a small adaptin (sigma-type subunit AP17).

It localises to the cell membrane. Its subcellular location is the membrane. It is found in the coated pit. Functionally, adaptins are components of the adapter complexes which link clathrin to receptors in coated vesicles. Clathrin-associated protein complexes are believed to interact with the cytoplasmic tails of membrane proteins, leading to their selection and concentration. Alpha adaptin is a subunit of the plasma membrane adapter. This Drosophila pseudoobscura pseudoobscura (Fruit fly) protein is AP-2 complex subunit alpha.